We begin with the raw amino-acid sequence, 85 residues long: MRITEANPDPDAKAVPAAAAPSTASDAAAAAAATAATAAAAAAATAATAAAAAAATAATAAKAAALTAANAAAAAAATAAAAARG.

The signal sequence occupies residues 1 to 21 (MRITEANPDPDAKAVPAAAAP).

This sequence belongs to the type-I AFP family.

It localises to the secreted. Contributes to protect fish blood from freezing at subzero sea water temperatures. Lowers the blood freezing point. Binds to nascent ice crystals and prevents further growth. The chain is Ice-structuring protein 4 from Pseudopleuronectes americanus (Winter flounder).